The sequence spans 490 residues: Stomatal closure-related actin-binding protein 3 (490 aa).

This sequence belongs to the SCAB family. In terms of tissue distribution, expressed in roots, stems, leaves, siliques and flowers.

It localises to the cytoplasm. The protein resides in the cytoskeleton. Its function is as follows. Probable plant-specific actin binding protein that bundles and stabilizes microfilaments (MFs). The polypeptide is Stomatal closure-related actin-binding protein 3 (Arabidopsis thaliana (Mouse-ear cress)).